We begin with the raw amino-acid sequence, 518 residues long: 3-octaprenyl-4-hydroxybenzoate carboxy-lyase (518 aa).

Asn177 provides a ligand contact to Mn(2+). Prenylated FMN is bound by residues 180-182 (IYR), 194-196 (RWL), and 199-200 (RG). Glu243 contacts Mn(2+). Residue Asp318 is the Proton donor of the active site.

It belongs to the UbiD family. Homohexamer. Prenylated FMN is required as a cofactor. It depends on Mn(2+) as a cofactor.

It is found in the cell membrane. The enzyme catalyses a 4-hydroxy-3-(all-trans-polyprenyl)benzoate + H(+) = a 2-(all-trans-polyprenyl)phenol + CO2. The protein operates within cofactor biosynthesis; ubiquinone biosynthesis. Catalyzes the decarboxylation of 3-octaprenyl-4-hydroxy benzoate to 2-octaprenylphenol, an intermediate step in ubiquinone biosynthesis. In Burkholderia orbicola (strain AU 1054), this protein is 3-octaprenyl-4-hydroxybenzoate carboxy-lyase.